The following is an 866-amino-acid chain: Probable outer membrane usher protein ElfC (866 aa).

Positions 1 to 35 (MYRTHRQHSLLSSGGVPSFIGGLVVFVSAAFNAQA) are cleaved as a signal peptide.

It belongs to the fimbrial export usher family.

Its subcellular location is the cell outer membrane. Its function is as follows. Part of the elfADCG fimbrial operon, which could be required for adherence to host epithelial cells. Could be involved in the export and assembly of the ElfA fimbrial subunits across the outer membrane. The sequence is that of Probable outer membrane usher protein ElfC (elfC) from Escherichia coli O157:H7.